The chain runs to 315 residues: Aspartate carbamoyltransferase catalytic subunit (315 aa).

Carbamoyl phosphate is bound by residues R64 and T65. L-aspartate is bound at residue K93. Carbamoyl phosphate is bound by residues R114, H142, and Q145. Residues R175 and R237 each coordinate L-aspartate. 2 residues coordinate carbamoyl phosphate: L276 and P277.

This sequence belongs to the aspartate/ornithine carbamoyltransferase superfamily. ATCase family. As to quaternary structure, heterooligomer of catalytic and regulatory chains.

The catalysed reaction is carbamoyl phosphate + L-aspartate = N-carbamoyl-L-aspartate + phosphate + H(+). The protein operates within pyrimidine metabolism; UMP biosynthesis via de novo pathway; (S)-dihydroorotate from bicarbonate: step 2/3. Its function is as follows. Catalyzes the condensation of carbamoyl phosphate and aspartate to form carbamoyl aspartate and inorganic phosphate, the committed step in the de novo pyrimidine nucleotide biosynthesis pathway. The protein is Aspartate carbamoyltransferase catalytic subunit of Thermofilum pendens (strain DSM 2475 / Hrk 5).